An 88-amino-acid polypeptide reads, in one-letter code: Small ribosomal subunit protein uS15c (88 aa).

The protein belongs to the universal ribosomal protein uS15 family. As to quaternary structure, part of the 30S ribosomal subunit.

It localises to the plastid. It is found in the chloroplast. This is Small ribosomal subunit protein uS15c (rps15) from Arabidopsis thaliana (Mouse-ear cress).